A 394-amino-acid polypeptide reads, in one-letter code: Acetyl-CoA acetyltransferase (394 aa).

Cys-89 (acyl-thioester intermediate) is an active-site residue. Active-site proton acceptor residues include His-350 and Cys-380.

This sequence belongs to the thiolase-like superfamily. Thiolase family. As to quaternary structure, homotetramer.

Its subcellular location is the cytoplasm. The catalysed reaction is 2 acetyl-CoA = acetoacetyl-CoA + CoA. It participates in biopolymer metabolism; poly-(R)-3-hydroxybutanoate biosynthesis. It functions in the pathway metabolic intermediate biosynthesis; (R)-mevalonate biosynthesis; (R)-mevalonate from acetyl-CoA: step 1/3. This is Acetyl-CoA acetyltransferase from Allochromatium vinosum (strain ATCC 17899 / DSM 180 / NBRC 103801 / NCIMB 10441 / D) (Chromatium vinosum).